The chain runs to 120 residues: UPF0231 protein YacL (120 aa).

Belongs to the UPF0231 family.

The chain is UPF0231 protein YacL from Salmonella agona (strain SL483).